Consider the following 60-residue polypeptide: Large ribosomal subunit protein bL32 (60 aa).

The segment covering 1-16 has biased composition (basic residues); sequence MAVPKRKTTPSKRGMR. The interval 1–60 is disordered; sequence MAVPKRKTTPSKRGMRRSADALKQPAYVENPDSGELHRPHHVDLKSGMYRGKQILKPKGE. The span at 34 to 44 shows a compositional bias: basic and acidic residues; it reads GELHRPHHVDL.

Belongs to the bacterial ribosomal protein bL32 family.

The polypeptide is Large ribosomal subunit protein bL32 (Parvibaculum lavamentivorans (strain DS-1 / DSM 13023 / NCIMB 13966)).